A 173-amino-acid chain; its full sequence is Protein MOTHER of FT and TFL1 (173 aa).

Position 2 is an N-acetylalanine (alanine 2).

This sequence belongs to the phosphatidylethanolamine-binding protein family. Expressed in gametophytes and developing seeds.

The protein localises to the cytoplasm. In terms of biological role, may form complexes with phosphorylated ligands by interfering with kinases and their effectors. Regulates seed germination via the abscisic acid (ABA) and gibberellic acid (GA)signaling pathways. During seed germination, MFT expression is directly repressed by ABI3 or promoted by ABI5 in the ABA signaling pathway. Involved in a negative feedback regulation of ABA signaling. Promotes embryo growth by direct repression of ABI5. In the GA signaling pathway, MFT expression is promoted by the DELLA protein RGL2 during seed germination. May regulate seed germination and fertility through the brassinosteroid (BR) signaling pathway. The protein is Protein MOTHER of FT and TFL1 (MFT) of Arabidopsis thaliana (Mouse-ear cress).